The primary structure comprises 2670 residues: Inositol 1,4,5-trisphosphate-gated calcium channel ITPR3 (2670 aa).

Residues 1-2233 lie on the Cytoplasmic side of the membrane; it reads MNEMSSFLHI…YVEGASTGVL (2233 aa). MIR domains follow at residues 113–173, 174–224, 232–288, 295–372, and 378–434; these read GDVV…LRSN, GDNV…INLF, EEVL…VEVV, GGAG…LDPT, and DSFV…IVSV. Residues R266, L269, and R270 each coordinate 1D-myo-inositol 1,4,5-trisphosphate. 1D-myo-inositol 1,4,5-trisphosphate-binding residues include R503, K507, R510, Y567, R568, and K569. R743 contacts Ca(2+). Phosphoserine occurs at positions 916 and 934. E1122 and E1125 together coordinate Ca(2+). A compositionally biased stretch (basic and acidic residues) spans 1138–1153; it reads EVEAGATKDKKERPSD. Disordered regions lie at residues 1138–1164 and 1807–1835; these read EVEAGATKDKKERPSDEEGFLQPHGEK and NMSDLGSQPREDREPADPATKGRVSSFSM. A phosphoserine mark is found at S1813, S1832, and S1834. Residues E1881 and E1945 each contribute to the Ca(2+) site. Residues A1995, E2148, and K2151 each contribute to the ATP site. Residues 2234-2254 form a helical membrane-spanning segment; it reads GSPLISLLFWILICFSIAALF. At 2255 to 2262 the chain is on the extracellular side; it reads TKRYSVRP. The helical transmembrane segment at 2263–2283 threads the bilayer; the sequence is LIVALILRSIYYLGIGPTLNI. Over 2284 to 2292 the chain is Cytoplasmic; it reads LGALNLTNK. Residues 2293–2310 traverse the membrane as a helical segment; sequence IVFVVSFVGNRGTFIRGY. Over 2311-2324 the chain is Extracellular; sequence KAMVMDMEFLYHVG. Residues 2325-2345 form a helical membrane-spanning segment; the sequence is YILTSVLGLFAHELFYSILLF. Residues 2346–2367 are Cytoplasmic-facing; the sequence is DLIYREETLFNVIKSVTRNGRS. The helical transmembrane segment at 2368-2388 threads the bilayer; it reads ILLTALLALILVYLFSIVGFL. Topologically, residues 2389-2495 are extracellular; sequence FLKDDFILEV…ESLFPARVVY (107 aa). A disulfide bond links C2454 and C2460. Residues 2496–2516 form a helical membrane-spanning segment; it reads DLLFFFIVIIIVLNLIFGVII. Residues 2517-2670 are Cytoplasmic-facing; it reads DTFADLRSEK…FVDVQNCMSR (154 aa). C2537 and F2538 together coordinate ATP. A Zn(2+)-binding site is contributed by C2537. Zn(2+) is bound by residues C2540 and H2557. Positions 2559, 2562, 2563, and 2564 each coordinate ATP. Zn(2+) is bound at residue H2562. Residue T2580 participates in Ca(2+) binding. 2 positions are modified to phosphoserine: S2608 and S2669.

It belongs to the InsP3 receptor family. In terms of assembly, homodimer. Homotetramer. Interacts with TRPC1, TRPC3, TRPC4. Interacts with TRPV4. Interacts with SIGMAR1. Found in a complex with AKT1 and PML; this interaction modulates IP3R3-phosphorylation and in turn ITPR3-dependent calcium release. Interacts with IRAG2 (via coiled-coil domain). Interacts with CABP1. Interacts with TMBIM4/LFG4. Interacts with CEMIP. Interacts with TESPA1. Interacts with TMEM203. Interacts with BOK; regulates ITPR3 expression. Interacts with BCL2L10. Interacts with CHGA and CHGB. Phosphorylated by AKT1 on serine and/or threonine residues.

It localises to the endoplasmic reticulum membrane. The protein localises to the cytoplasmic vesicle. The protein resides in the secretory vesicle membrane. It catalyses the reaction Ca(2+)(in) = Ca(2+)(out). Inositol 1,4,5-trisphosphate-gated calcium channel is regulated by cytosolic calcium in a biphasic manner. At low concentrations, cytosolic calcium binds at a high-affinity juxtamembrane domain (JD) calcium binding site, allowing ITPR3 to activate by escaping a low-energy resting state through an ensemble of preactivated states. At high cytosolic calcium concentrations, ITPR3 preferentially enters an inhibited state stabilized by calcium binding at a second, low-affinity cytoplasmic domain (CD) calcium binding site. Inositol 1,4,5-trisphosphate-gated calcium channel that, upon 1D-myo-inositol 1,4,5-trisphosphate binding, transports calcium from the endoplasmic reticulum lumen to cytoplasm, thus releasing the intracellular calcium and therefore participates in cellular calcium ion homeostasis. 1D-myo-inositol 1,4,5-trisphosphate binds to the ligand-free channel without altering its global conformation, yielding the low-energy resting state, then progresses through resting-to preactivated transitions to the higher energy preactivated state, which increases affinity for calcium, promoting binding of the low basal cytosolic calcium at the juxtamembrane domain (JD) site, favoring the transition through the ensemble of high-energy intermediate states along the trajectory to the fully-open activated state. Upon opening, releases calcium in the cytosol where it can bind to the low-affinity cytoplasmic domain (CD) site and stabilizes the inhibited state to terminate calcium release. This Mus musculus (Mouse) protein is Inositol 1,4,5-trisphosphate-gated calcium channel ITPR3.